Here is a 465-residue protein sequence, read N- to C-terminus: 23S rRNA (uracil(1939)-C(5))-methyltransferase RlmD (465 aa).

A disordered region spans residues 1–20 (MSEAVPLSTPGASHAGAATD). Residues 12–80 (ASHAGAATDR…PTYEQAQVVD (69 aa)) enclose the TRAM domain. Residues Cys93, Cys99, Cys102, and Cys181 each contribute to the [4Fe-4S] cluster site. Gln289, Phe318, Asn323, Glu339, Asn367, and Asp388 together coordinate S-adenosyl-L-methionine. The active-site Nucleophile is the Cys421.

The protein belongs to the class I-like SAM-binding methyltransferase superfamily. RNA M5U methyltransferase family. RlmD subfamily.

It catalyses the reaction uridine(1939) in 23S rRNA + S-adenosyl-L-methionine = 5-methyluridine(1939) in 23S rRNA + S-adenosyl-L-homocysteine + H(+). Functionally, catalyzes the formation of 5-methyl-uridine at position 1939 (m5U1939) in 23S rRNA. The protein is 23S rRNA (uracil(1939)-C(5))-methyltransferase RlmD of Burkholderia thailandensis (strain ATCC 700388 / DSM 13276 / CCUG 48851 / CIP 106301 / E264).